A 342-amino-acid polypeptide reads, in one-letter code: Ketol-acid reductoisomerase (NADP(+)) (342 aa).

The KARI N-terminal Rossmann domain maps to 2–182 (AEMFYDDDAD…GGLRAGGIKT (181 aa)). NADP(+) is bound by residues 25-28 (FGSQ), Lys48, Ser51, Ser53, and 83-86 (DHLQ). His108 is a catalytic residue. An NADP(+)-binding site is contributed by Gly134. The 146-residue stretch at 183-328 (TFTEETETDL…RELRKLMAWV (146 aa)) folds into the KARI C-terminal knotted domain. Asp191, Glu195, Glu227, and Glu231 together coordinate Mg(2+). Residue Ser252 participates in substrate binding.

This sequence belongs to the ketol-acid reductoisomerase family. Mg(2+) serves as cofactor.

It catalyses the reaction (2R)-2,3-dihydroxy-3-methylbutanoate + NADP(+) = (2S)-2-acetolactate + NADPH + H(+). The enzyme catalyses (2R,3R)-2,3-dihydroxy-3-methylpentanoate + NADP(+) = (S)-2-ethyl-2-hydroxy-3-oxobutanoate + NADPH + H(+). Its pathway is amino-acid biosynthesis; L-isoleucine biosynthesis; L-isoleucine from 2-oxobutanoate: step 2/4. It functions in the pathway amino-acid biosynthesis; L-valine biosynthesis; L-valine from pyruvate: step 2/4. Its function is as follows. Involved in the biosynthesis of branched-chain amino acids (BCAA). Catalyzes an alkyl-migration followed by a ketol-acid reduction of (S)-2-acetolactate (S2AL) to yield (R)-2,3-dihydroxy-isovalerate. In the isomerase reaction, S2AL is rearranged via a Mg-dependent methyl migration to produce 3-hydroxy-3-methyl-2-ketobutyrate (HMKB). In the reductase reaction, this 2-ketoacid undergoes a metal-dependent reduction by NADPH to yield (R)-2,3-dihydroxy-isovalerate. The sequence is that of Ketol-acid reductoisomerase (NADP(+)) from Kineococcus radiotolerans (strain ATCC BAA-149 / DSM 14245 / SRS30216).